We begin with the raw amino-acid sequence, 471 residues long: Abscission/NoCut checkpoint regulator (471 aa).

The segment at 39-64 (GGAGQGREGRSWGEGPRGPGLGRRDL) is disordered. An FYVE-type zinc finger spans residues 74 to 133 (ATMESRCYGCAVKFTLFKKEYGCKNCGRAFCSGCLSFSAAVPRTGNTQQKVCKQCHEVLT). Zn(2+) contacts are provided by C80, C83, C96, C99, C104, C107, C125, and C128. S144 bears the Phosphoserine mark. Positions 174-187 (DQMIAERLARLRQE) match the MIM1-A motif. K207 participates in a covalent cross-link: Glycyl lysine isopeptide (Lys-Gly) (interchain with G-Cter in SUMO2). Phosphothreonine is present on T243. Residues 271–299 (KGGGPAASLQNDLNQGGPGSTNSKRQANW) are disordered. The segment covering 278–299 (SLQNDLNQGGPGSTNSKRQANW) has biased composition (polar residues). Residues G286 and S293 each carry the phosphoserine modification. Positions 311–375 (EAALELREEN…RVLQQLTEEA (65 aa)) form a coiled coil. Residues 326–339 (ILALAKRLAMLRGQ) carry the MIM1-B motif. Position 354 is a phosphoserine (S354). The disordered stretch occupies residues 386 to 412 (PAEQASRPWTQPRGAEPEAQDVDPRPE). S463 is subject to Phosphoserine.

In terms of assembly, interacts (via MIM1-B) with VPS4A; interaction takes place at the midbody ring following cytokinesis checkpoint activation. Phosphorylated in vitro at Ser-22 by AURKB; however, phosphorylation at this site could not be confirmed in vivo. As to expression, detected in brain, heart, skeletal muscle and kidney. Expressed in the liver (at protein level).

Its subcellular location is the cytoplasm. The protein localises to the cytoskeleton. The protein resides in the microtubule organizing center. It is found in the centrosome. It localises to the cleavage furrow. Its subcellular location is the midbody. The protein localises to the midbody ring. Key regulator of abscission step in cytokinesis: part of the cytokinesis checkpoint, a process required to delay abscission to prevent both premature resolution of intercellular chromosome bridges and accumulation of DNA damage. Together with CHMP4C, required to retain abscission-competent VPS4 (VPS4A and/or VPS4B) at the midbody ring until abscission checkpoint signaling is terminated at late cytokinesis. Deactivation of AURKB results in dephosphorylation of CHMP4C followed by its dissociation from ZFYVE19/ANCHR and VPS4 and subsequent abscission. The chain is Abscission/NoCut checkpoint regulator (ZFYVE19) from Homo sapiens (Human).